Reading from the N-terminus, the 365-residue chain is tRNA N6-adenosine threonylcarbamoyltransferase (365 aa).

The Fe cation site is built by His119 and His123. Substrate contacts are provided by residues 141–145 (LVSGG), Asp174, Gly187, and Asn288. Asp316 lines the Fe cation pocket.

The protein belongs to the KAE1 / TsaD family. Requires Fe(2+) as cofactor.

It localises to the cytoplasm. The enzyme catalyses L-threonylcarbamoyladenylate + adenosine(37) in tRNA = N(6)-L-threonylcarbamoyladenosine(37) in tRNA + AMP + H(+). Its function is as follows. Required for the formation of a threonylcarbamoyl group on adenosine at position 37 (t(6)A37) in tRNAs that read codons beginning with adenine. Is involved in the transfer of the threonylcarbamoyl moiety of threonylcarbamoyl-AMP (TC-AMP) to the N6 group of A37, together with TsaE and TsaB. TsaD likely plays a direct catalytic role in this reaction. The sequence is that of tRNA N6-adenosine threonylcarbamoyltransferase from Rhizobium etli (strain CIAT 652).